Here is a 231-residue protein sequence, read N- to C-terminus: Cell cycle transcriptional regulator CtrA (231 aa).

Residues 2 to 116 (RVLLIEDDSA…EMIARIHAVV (115 aa)) enclose the Response regulatory domain. Residue D51 is modified to 4-aspartylphosphate. The ompR/PhoB-type DNA-binding region spans 124-223 (QSVIKTGDIV…VWGRGYVLRD (100 aa)).

In terms of processing, phosphorylated by CckA.

In terms of biological role, forms part of a two-component regulatory system CtrA/CckA that controls multiple events in the cell cycle, including cell division, stalk synthesis and cell cycle-specific transcription. Binds to a group of cell cycle-regulated promoters critical for DNA replication, DNA methylation, and class II flagellar biogenesis. This is Cell cycle transcriptional regulator CtrA (ctrA) from Caulobacter vibrioides (strain ATCC 19089 / CIP 103742 / CB 15) (Caulobacter crescentus).